We begin with the raw amino-acid sequence, 364 residues long: Aminomethyltransferase (364 aa).

Belongs to the GcvT family. In terms of assembly, the glycine cleavage system is composed of four proteins: P, T, L and H.

It carries out the reaction N(6)-[(R)-S(8)-aminomethyldihydrolipoyl]-L-lysyl-[protein] + (6S)-5,6,7,8-tetrahydrofolate = N(6)-[(R)-dihydrolipoyl]-L-lysyl-[protein] + (6R)-5,10-methylene-5,6,7,8-tetrahydrofolate + NH4(+). Functionally, the glycine cleavage system catalyzes the degradation of glycine. The sequence is that of Aminomethyltransferase from Shewanella baltica (strain OS195).